A 308-amino-acid chain; its full sequence is Phosphoribosylaminoimidazole-succinocarboxamide synthase (308 aa).

It belongs to the SAICAR synthetase family.

The catalysed reaction is 5-amino-1-(5-phospho-D-ribosyl)imidazole-4-carboxylate + L-aspartate + ATP = (2S)-2-[5-amino-1-(5-phospho-beta-D-ribosyl)imidazole-4-carboxamido]succinate + ADP + phosphate + 2 H(+). It functions in the pathway purine metabolism; IMP biosynthesis via de novo pathway; 5-amino-1-(5-phospho-D-ribosyl)imidazole-4-carboxamide from 5-amino-1-(5-phospho-D-ribosyl)imidazole-4-carboxylate: step 1/2. The sequence is that of Phosphoribosylaminoimidazole-succinocarboxamide synthase from Stenotrophomonas maltophilia (strain R551-3).